A 222-amino-acid chain; its full sequence is CASP-like protein 1E1 (222 aa).

The Cytoplasmic portion of the chain corresponds to 1-59 (MEASRVKPGFNGVGMAAGSVNGSSRRPGPGLGYGYGYYMGSGAAAGGSGRAAQAPVDGC). The chain crosses the membrane as a helical span at residues 60 to 80 (SVALRVFVVASTLVSAVVMGV). Residues 81–110 (DRQTRTIQITITDALPPLEVPLTANWSYSS) are Extracellular-facing. A glycan (N-linked (GlcNAc...) asparagine) is linked at Asn-105. A helical transmembrane segment spans residues 111–131 (AFVYFVVANAMVCLFSAAALA). Topologically, residues 132–146 (ACRSRAAMVPVMVGD) are cytoplasmic. Residues 147–167 (LLALALLYSAVGAAAEFGILG) traverse the membrane as a helical segment. Residues 168-189 (ERGNSHVRWAKVCNVYGRFCDR) lie on the Extracellular side of the membrane. The helical transmembrane segment at 190 to 210 (AMAAVIVSLIGAFANLVLLML) threads the bilayer. Residues 211 to 222 (NILTIHKSSSYY) lie on the Cytoplasmic side of the membrane.

This sequence belongs to the Casparian strip membrane proteins (CASP) family. Homodimer and heterodimers.

The protein localises to the cell membrane. This Sorghum bicolor (Sorghum) protein is CASP-like protein 1E1.